The sequence spans 182 residues: Transcription termination/antitermination protein NusG (182 aa).

One can recognise a KOW domain in the interval 131–163 (VGEQVRIKSGPFANQVGEVQEIEADKFKLTVLV).

Belongs to the NusG family.

Functionally, participates in transcription elongation, termination and antitermination. This is Transcription termination/antitermination protein NusG from Staphylococcus carnosus (strain TM300).